The chain runs to 4625 residues: Dynein-1-alpha heavy chain, flagellar inner arm I1 complex (4625 aa).

The interval 1–1919 (MDRRLEWVKE…LIRQCTGLFK (1919 aa)) is stem. Residues 70–84 (EQAPEAEDGEGEEHD) show a composition bias toward acidic residues. Residues 70–163 (EQAPEAEDGE…DEPPAPPAPK (94 aa)) form a disordered region. A compositionally biased stretch (low complexity) spans 111-140 (EDAPAAAAEANGANPEDEAAAPADGAADGA). Over residues 144–155 (GGEEGDGAEGDE) the composition is skewed to acidic residues. Residue 960-967 (AGTNSGKS) participates in ATP binding. Coiled-coil stretches lie at residues 1227–1259 (EELK…RYRT) and 1339–1409 (TVEL…AVRQ). AAA regions lie at residues 1920–2141 (YGYE…VLVM), 2201–2437 (DVVE…RRPK), 2550–2800 (EPPA…IYEG), and 2906–3155 (NFYN…LRRY). ATP-binding positions include 1958–1965 (GPAGTGKT), 2242–2249 (GQTGGGKT), 2588–2595 (GESGTAKS), and 2945–2952 (GVGGSGKQ). 2 coiled-coil regions span residues 3192 to 3297 (LEKL…IRSY) and 3400 to 3494 (KRKK…LIGD). The stalk stretch occupies residues 3192–3494 (LEKLIQAAVE…ESRRDRLIGD (303 aa)). AAA regions lie at residues 3542–3773 (LTSD…EIAE) and 3998–4216 (ITRF…LIST). 3680-3687 (GPEISGKT) lines the ATP pocket. Residues 3701-3788 (EQLLNVTLRH…KVTAAEIEET (88 aa)) are a coiled coil.

Belongs to the dynein heavy chain family. As to quaternary structure, the I1 inner arm complex (also known as the f dynein complex) is a two-headed isoform composed of two heavy chains (1-alpha and 1-beta), three intermediate chains and three light chains. I1 occupies a specific position proximal to the first radial spoke and repeats every 96 nm along the length of the axoneme.

Its subcellular location is the cell projection. The protein localises to the cilium. The protein resides in the flagellum. It is found in the cytoplasm. It localises to the cytoskeleton. Its subcellular location is the flagellum axoneme. Force generating protein of eukaryotic cilia and flagella. Produces force towards the minus ends of microtubules. Dynein has ATPase activity; the force-producing power stroke is thought to occur on release of ADP. Required for assembly of the I1 inner arm complex and its targeting to the appropriate axoneme location. Also required for phototaxis. In Chlamydomonas reinhardtii (Chlamydomonas smithii), this protein is Dynein-1-alpha heavy chain, flagellar inner arm I1 complex (DHC1).